Consider the following 524-residue polypeptide: Mitochondrial-processing peptidase subunit alpha (524 aa).

Residues 1-32 (MATAVWAAARLLRGSAALCARPKFGSPAHRRF) constitute a mitochondrion transit peptide. Position 63 is an N6-succinyllysine (lysine 63).

Belongs to the peptidase M16 family. As to quaternary structure, heterodimer of PMPCA (alpha) and PMPCB (beta) subunits, forming the mitochondrial processing protease (MPP) in which PMPCA is involved in substrate recognition and binding and PMPCB is the catalytic subunit.

It is found in the mitochondrion matrix. The protein localises to the mitochondrion inner membrane. Substrate recognition and binding subunit of the essential mitochondrial processing protease (MPP), which cleaves the mitochondrial sequence off newly imported precursors proteins. The polypeptide is Mitochondrial-processing peptidase subunit alpha (Pmpca) (Rattus norvegicus (Rat)).